Consider the following 157-residue polypeptide: MEKIPMTPDGLARLEAELKSLKSVDRPAVIRAISEARDHGDLSENAEYHAARERQSFIEGRIKELEDVTSRAEVIDISKLSGDTVRFGATVSVLDEDSEEQTTYQIVGAHEADLKAGRISVASPIGKALIGKKVGDSIEVKAPGGSKFYEVTMVRFG.

A coiled-coil region spans residues 46–67; sequence AEYHAARERQSFIEGRIKELED.

Belongs to the GreA/GreB family.

In terms of biological role, necessary for efficient RNA polymerase transcription elongation past template-encoded arresting sites. The arresting sites in DNA have the property of trapping a certain fraction of elongating RNA polymerases that pass through, resulting in locked ternary complexes. Cleavage of the nascent transcript by cleavage factors such as GreA or GreB allows the resumption of elongation from the new 3'terminus. GreA releases sequences of 2 to 3 nucleotides. This is Transcription elongation factor GreA from Rhodospirillum rubrum (strain ATCC 11170 / ATH 1.1.1 / DSM 467 / LMG 4362 / NCIMB 8255 / S1).